Here is a 203-residue protein sequence, read N- to C-terminus: CASP-like protein 5A2 (203 aa).

Over 1-63 (MRASRPVVHP…KDPPGAPGTP (63 aa)) the chain is Cytoplasmic. The interval 39-58 (AAHGGENAQPRGVRMKDPPG) is disordered. Residues 64–84 (GGLGLRLVQAFFAAAALAVMA) form a helical membrane-spanning segment. Topologically, residues 85 to 94 (STDDFPSVSA) are extracellular. The helical transmembrane segment at 95–115 (FCYLVAAAILQCLWSLSLAVV) threads the bilayer. The Cytoplasmic portion of the chain corresponds to 116–139 (DIYALLVKRSLRNPQAVCIFTIGD). The chain crosses the membrane as a helical span at residues 140 to 160 (GITGTLTLGAACASAGITVLI). Residues 161 to 177 (GNDLNICANNHCASFET) lie on the Extracellular side of the membrane. A helical membrane pass occupies residues 178–198 (ATAMAFISWFALAPSCVLNFW). Topologically, residues 199-203 (SMASR) are cytoplasmic.

This sequence belongs to the Casparian strip membrane proteins (CASP) family. In terms of assembly, homodimer and heterodimers.

It is found in the cell membrane. In Oryza sativa subsp. indica (Rice), this protein is CASP-like protein 5A2.